A 142-amino-acid chain; its full sequence is Small ribosomal subunit protein uS8c (142 aa).

The protein belongs to the universal ribosomal protein uS8 family. In terms of assembly, part of the 30S ribosomal subunit.

The protein resides in the plastid. Functionally, one of the primary rRNA binding proteins, it binds directly to 16S rRNA central domain where it helps coordinate assembly of the platform of the 30S subunit. This chain is Small ribosomal subunit protein uS8c (rps8), found in Euglena longa (Euglenophycean alga).